Consider the following 249-residue polypeptide: Cyclin-dependent kinase inhibitor 2 (249 aa).

Residues 118-180 (KVCTQAGEDH…MCRRSSTTSA (63 aa)) are disordered. Residues 161–180 (AESNQEAKQQMCRRSSTTSA) are compositionally biased toward polar residues.

Belongs to the CDI family. ICK/KRP subfamily.

This Oryza sativa subsp. japonica (Rice) protein is Cyclin-dependent kinase inhibitor 2 (KRP2).